We begin with the raw amino-acid sequence, 390 residues long: MLSRKGIIPEEYVLTRLAEDPAEPRYRTRERRARFVSKKGNCNVAHKNIREQGRFLQDVFTTLVDLKWPHTLLIFTMSFLCSWLLFAMVWWLIAFAHGDLAPGEGTNVPCVTSIHSFSSAFLFSIEVQVTIGFGGRMVTEECPLAILILIVQNIVGLMINAIMLGCIFMKTAQAHRRAETLIFSKHAVITLRHGRLCFMLRVGDLRKSMIISATIHMQVVRKTTSPEGEVVPLHQVDIPMENGVGGNGIFLVAPLIIYHVIDSNSPLYDLAPSDLHHHQDLEIIVILEGVVETTGITTQARTSYLADEILWGQRFVPIVAEEDGRYSVDYSKFGNTIKVPTPLCTARQLDEDRSLLDALTLASSRGPLRKRSVAVAKAKPKFSISPDSLS.

The Cytoplasmic segment spans residues 1-65 (MLSRKGIIPE…LQDVFTTLVD (65 aa)). Positions 48 and 50 each coordinate ATP. The helical transmembrane segment at 66 to 92 (LKWPHTLLIFTMSFLCSWLLFAMVWWL) threads the bilayer. Residues 93-116 (IAFAHGDLAPGEGTNVPCVTSIHS) are Extracellular-facing. A disulfide bridge connects residues cysteine 110 and cysteine 142. The segment at residues 117–133 (FSSAFLFSIEVQVTIGF) is an intramembrane region (discontinuously helical; Pore-forming). Residues threonine 130 and phenylalanine 133 each contribute to the K(+) site. The Selectivity filter motif lies at 130 to 135 (TIGFGG). Topologically, residues 134-142 (GGRMVTEEC) are extracellular. A helical transmembrane segment spans residues 143-171 (PLAILILIVQNIVGLMINAIMLGCIFMKT). The Cytoplasmic segment spans residues 172-390 (AQAHRRAETL…KFSISPDSLS (219 aa)). Residue arginine 176 coordinates a 1,2-diacyl-sn-glycero-3-phospho-(1D-myo-inositol-4,5-bisphosphate). Residue tyrosine 330 coordinates ATP. Threonine 341 bears the Phosphothreonine; by MAPK1 mark. Serine 385 carries the post-translational modification Phosphoserine; by MAPK1.

The protein belongs to the inward rectifier-type potassium channel (TC 1.A.2.1) family. KCNJ11 subfamily. Homotetramer; the homotetramer binds four ATP molecules (one ATP per subunit). Forms an heterooctamer with ABCC8/SUR1; one KCNJ11 homotetramer interacts with four ABCC8/SUR1 molecules. Interacts with ABCC9/SUR2. Phosphorylation by MAPK1 results in changes in channel gating that destabilize the closed states and reduce the ATP sensitivity.

The protein localises to the membrane. The enzyme catalyses K(+)(in) = K(+)(out). KATP channels are regulated by cytoplasmic ATP/ADP ratios; ATP inhibits the channel by closing the pore, while ADP activates the channel. Activated by phosphatidylinositol 4,5-biphosphate (PtdIns(4,5)P2). In terms of biological role, inward rectifier potassium channel that forms the pore of ATP-sensitive potassium channels (KATP), regulating potassium permeability as a function of cytoplasmic ATP and ADP concentrations in many different cells. Inward rectifier potassium channels are characterized by a greater tendency to allow potassium to flow into the cell rather than out of it. Their voltage dependence is regulated by the concentration of extracellular potassium; as external potassium is raised, the voltage range of the channel opening shifts to more positive voltages. The inward rectification is mainly due to the blockage of outward current by internal magnesium. Can be blocked by extracellular barium. In pancreatic cells, it forms KATP channels with ABCC8/SUR1. Can form cardiac and smooth muscle-type KATP channels with ABCC9. The protein is ATP-sensitive inward rectifier potassium channel 11 (Kcnj11) of Mus musculus (Mouse).